A 386-amino-acid polypeptide reads, in one-letter code: Synaptotagmin-5 (386 aa).

Over residues 1 to 16 the composition is skewed to pro residues; that stretch reads MFPEPPTPGPPSPDTP. The interval 1-23 is disordered; it reads MFPEPPTPGPPSPDTPPDSSRIS. The Vesicular portion of the chain corresponds to 1 to 24; that stretch reads MFPEPPTPGPPSPDTPPDSSRISH. The helical transmembrane segment at 25–45 threads the bilayer; the sequence is GPVPPWALATIVLVSGLLIFS. Residues 46–386 lie on the Cytoplasmic side of the membrane; that stretch reads CCFCLYRKSC…PDRVRLLPAP (341 aa). 2 C2 domains span residues 108-227 and 239-372; these read ELGR…QAWR and KLGD…AQWH. Residues Leu-138, Asp-139, Asp-145, Asp-197, Phe-198, Asp-199, Ser-202, Asp-205, Asp-270, Asp-276, Asp-330, and Asp-332 each contribute to the Ca(2+) site.

It belongs to the synaptotagmin family. As to quaternary structure, homodimer. Interacts with both alpha- and beta-tubulin. Ca(2+) serves as cofactor.

The protein resides in the cytoplasmic vesicle. It localises to the secretory vesicle. It is found in the synaptic vesicle membrane. The protein localises to the recycling endosome membrane. May be involved in Ca(2+)-dependent exocytosis of secretory vesicles through Ca(2+) and phospholipid binding to the C2 domain or may serve as Ca(2+) sensors in the process of vesicular trafficking and exocytosis. Regulates the Ca(2+)-dependent secretion of norepinephrine in PC12 cells. Required for export from the endocytic recycling compartment to the cell surface. In Homo sapiens (Human), this protein is Synaptotagmin-5 (SYT5).